We begin with the raw amino-acid sequence, 141 residues long: MLSAQERAQIAQVWDLIAGHEAQFGAELLLRLFTVYPSTKVYFPHLSACQDATQLLSHGQRMLAAVGAAVQHVDNLRAALSPLADLHALVLRVDPANFPLLIQCFHVVLASHLQDEFTVQMQAAWDKFLTGVAVVLTEKYR.

The region spanning 1 to 141 (MLSAQERAQI…VAVVLTEKYR (141 aa)) is the Globin domain. Heme b contacts are provided by histidine 58 and histidine 87.

It belongs to the globin family. In terms of tissue distribution, expressed in erythroid tissues.

In Homo sapiens (Human), this protein is Hemoglobin subunit mu (HBM).